The primary structure comprises 614 residues: V-type proton ATPase catalytic subunit A isoform 1 (614 aa).

An ATP-binding site is contributed by 247–254 (GAFGCGKT).

The protein belongs to the ATPase alpha/beta chains family. As to quaternary structure, V-ATPase is a heteromultimeric enzyme made up of two complexes: the ATP-hydrolytic V1 complex and the proton translocation V0 complex. The V1 complex consists of three catalytic AB heterodimers that form a heterohexamer, three peripheral stalks each consisting of EG heterodimers, one central rotor including subunits D and F, and the regulatory subunits C and H. The proton translocation complex V0 consists of the proton transport subunit a, a ring of proteolipid subunits c9c'', rotary subunit d, subunits e and f, and the accessory subunits VhaAC45 and ATP6AP2.

The enzyme catalyses ATP + H2O + 4 H(+)(in) = ADP + phosphate + 5 H(+)(out). Its activity is regulated as follows. ATP hydrolysis occurs at the interface between the nucleotide-binding domains of subunits A and B. ATP hydrolysis triggers a conformational change in the subunits D and F, which induces a shift of subunit d. The c-ring is subsequently rotated and results in a continuous proton translocation across the membrane. Functionally, catalytic subunit of the V1 complex of vacuolar(H+)-ATPase (V-ATPase), a multisubunit enzyme composed of a peripheral complex (V1) that hydrolyzes ATP and a membrane integral complex (V0) that translocates protons. V-ATPase is responsible for acidifying and maintaining the pH of intracellular compartments and in some cell types, is targeted to the plasma membrane, where it is responsible for acidifying the extracellular environment. The polypeptide is V-type proton ATPase catalytic subunit A isoform 1 (Vha68-1) (Drosophila melanogaster (Fruit fly)).